The sequence spans 347 residues: Phenylalanine--tRNA ligase alpha subunit (347 aa).

Glu261 is a binding site for Mg(2+).

The protein belongs to the class-II aminoacyl-tRNA synthetase family. Phe-tRNA synthetase alpha subunit type 1 subfamily. As to quaternary structure, tetramer of two alpha and two beta subunits. The cofactor is Mg(2+).

Its subcellular location is the cytoplasm. It carries out the reaction tRNA(Phe) + L-phenylalanine + ATP = L-phenylalanyl-tRNA(Phe) + AMP + diphosphate + H(+). The sequence is that of Phenylalanine--tRNA ligase alpha subunit from Streptococcus pyogenes serotype M3 (strain ATCC BAA-595 / MGAS315).